The following is a 126-amino-acid chain: Holo-[acyl-carrier-protein] synthase (126 aa).

Positions 9 and 58 each coordinate Mg(2+).

This sequence belongs to the P-Pant transferase superfamily. AcpS family. The cofactor is Mg(2+).

Its subcellular location is the cytoplasm. The enzyme catalyses apo-[ACP] + CoA = holo-[ACP] + adenosine 3',5'-bisphosphate + H(+). In terms of biological role, transfers the 4'-phosphopantetheine moiety from coenzyme A to a Ser of acyl-carrier-protein. This Enterobacter sp. (strain 638) protein is Holo-[acyl-carrier-protein] synthase.